The following is a 589-amino-acid chain: Intermediate filament protein B (589 aa).

Residues 1–84 (SLKQSQESSE…LEATDKEKKE (84 aa)) form a head region. Residues 81–433 (EKKEMQGLND…KMLEGEESRV (353 aa)) enclose the IF rod domain. Residues 85–116 (MQGLNDRLGNYIDRVKKLEEQNRKLVADLDEL) form a coil 1A region. The segment at 117-130 (RGRWGKDTSEIKIQ) is linker 1. The interval 131 to 268 (YSDSLRDARK…RVHEQEVKEL (138 aa)) is coil 1B. The segment at 269–285 (QALLAQAPADTREFFKN) is linker 12. Positions 286 to 433 (ELALAIRDIK…KMLEGEESRV (148 aa)) are coil 2. Residues 434 to 589 (GLRQMVEQVV…HTQKTIQTGQ (156 aa)) are tail. Positions 446–470 (HSLQQQEDTDSTRNVRGEVSTKTTF) are disordered. In terms of domain architecture, LTD spans 466 to 584 (TKTTFQRSAK…DERATHTQKT (119 aa)).

The protein belongs to the intermediate filament family. As to quaternary structure, a and B can form homopolymers. Giant body muscle cells.

The protein localises to the cytoplasm. This Ascaris suum (Pig roundworm) protein is Intermediate filament protein B.